A 111-amino-acid chain; its full sequence is Large ribosomal subunit protein P2-2 (111 aa).

The interval 86–111 is disordered; sequence APAAAAAKKDEPEEEADDDMGFGLFD.

This sequence belongs to the eukaryotic ribosomal protein P1/P2 family. In terms of assembly, P1 and P2 exist as dimers at the large ribosomal subunit. In terms of processing, phosphorylated.

In terms of biological role, plays an important role in the elongation step of protein synthesis. This is Large ribosomal subunit protein P2-2 (LIP') from Leishmania infantum.